The following is a 11197-amino-acid chain: Nonribosomal peptide synthetase 5 (11197 aa).

The adenylation (A) domain 1 stretch occupies residues 19–413; it reads AQRARKQPDA…DGTLQVVGHK (395 aa). The disordered stretch occupies residues 426–452; it reads HASSSASSVGETPGVTGPISTPMGDSV. The interval 690–897 is condensation (C) domain 1; it reads KQLRQFCQEQ…LMDESMKQQI (208 aa). Residues 918-1310 form an adenylation (A) domain 2 region; the sequence is DAAQDYPDAP…GRHDGQLKVR (393 aa). In terms of domain architecture, Carrier 1 spans 1446-1522; it reads ADRSPVHMML…DMANNIAISE (77 aa). Position 1483 is an O-(pantetheine 4'-phosphoryl)serine (S1483). The tract at residues 1952–2380 is condensation (C) domain 2; the sequence is VEDVYPCSPV…SDISLMDPLS (429 aa). Residues 2406-2805 are adenylation (A) domain 3; it reads VARIEPDKMA…QRKDTQIKIR (400 aa). The Carrier 2 domain occupies 2945–3021; it reads DSLTSTEVTI…SLAAFVDYDS (77 aa). S2982 carries the post-translational modification O-(pantetheine 4'-phosphoryl)serine. Positions 3041-3481 are epimerase (E) domain 1; that stretch reads EESFALSPIQ…TSTMKSEFTL (441 aa). The tract at residues 3515 to 3957 is condensation (C) domain 3; sequence EEIFPCSPMQ…VSPETRCELD (443 aa). The segment at 3976 to 4371 is adenylation (A) domain 4; that stretch reads FEQQVEKIPD…RRRDNQVKVR (396 aa). Positions 4508–4584 constitute a Carrier 3 domain; that stretch reads RKLTPMEQQL…ELANHARFKA (77 aa). Residue S4545 is modified to O-(pantetheine 4'-phosphoryl)serine. Residues 4603 to 5022 form an epimerase (E) domain 2 region; sequence FPLLPIQRMF…LNEYTAALRS (420 aa). Residues 5069-5501 form a condensation (C) domain 4 region; sequence ESIYPCSPLQ…LVGDSERQGL (433 aa). The adenylation (A) domain 5 stretch occupies residues 5521 to 5918; sequence EAQVKAIPDN…RRKDTQVKVR (398 aa). Residues 6068–6141 form the Carrier 4 domain; it reads SEAEDIIRAV…ALAQFVSQST (74 aa). S6102 carries the post-translational modification O-(pantetheine 4'-phosphoryl)serine. The interval 6162–6512 is epimerase (E) domain 3; that stretch reads FSLSPIQQMF…MEILFNYFGQ (351 aa). A condensation (C) domain 5 region spans residues 6636-7076; it reads EEIFPCSPIQ…LVGAETRREM (441 aa). Residues 7097–7491 form an adenylation (A) domain 6 region; that stretch reads ERNSQAMPDR…RRRDNQVKVR (395 aa). The region spanning 7636–7712 is the Carrier 5 domain; it reads KPKTKMEEHF…DLAGRSRFKN (77 aa). An O-(pantetheine 4'-phosphoryl)serine modification is found at S7673. Residues 7733–8162 form an epimerase (E) domain 4 region; the sequence is ALLPIQRLFF…KYMLETLASQ (430 aa). The segment at 8205–8638 is condensation (C) domain 6; sequence EASYPCSPLQ…MLGDSGRKRI (434 aa). An adenylation (A) domain 7 region spans residues 8660–8832; sequence EAHVKESPNR…DHRATATEIV (173 aa). Residues 9173-9248 form the Carrier 6 domain; the sequence is SAQTAVVQII…AMAAKAQQIG (76 aa). S9209 is modified (O-(pantetheine 4'-phosphoryl)serine). Residues 9565–9683 form an epimerase (E) domain 5 region; it reads RVKDMRRAIP…LHEVVSALQK (119 aa). Residues 9721 to 10116 form a condensation (C) domain 7 region; that stretch reads VEDVYPTSPM…LVPAKHMEQL (396 aa). Residues 10136-10529 form an adenylation (A) domain 8 region; that stretch reads DDMVRSTPTA…VGRKDTQIKI (394 aa). Positions 10663–10749 constitute a Carrier 7 domain; it reads LDSSDYVAMQ…TLAVTIKADM (87 aa). At S10708 the chain carries O-(pantetheine 4'-phosphoryl)serine. The segment at 10806–11104 is thioesterase (TE) domain; that stretch reads NFLVTGSTGF…SLRPMSGPEW (299 aa).

The protein belongs to the NRP synthetase family.

It functions in the pathway secondary metabolite biosynthesis. Functionally, nonribosomal peptide synthetase; part of the Fg3_54/C64 gene cluster that mediates the biosynthesis of the octapeptide fusaoctaxin A, a virulence factor that is required for cell-to-cell invasiveness of plant host. The 2 nonribosomal peptide synthetases NRPS9 and NRPS5 form an assembly line which likely utilizes GABA as a starter unit (loaded on the unique module M1 of NRPS9) and sequentially incorporates seven extender units composed of the residues L-Ala, L-allo-Ile, L-Ser, L-Val, L-Ser, L-Leu and L-Leu, respectively. During the process, each of the residues that are tethered on modules M3-M7 of NRPS5 containing an E domain can undergo an epimerization reaction to produce a D-configuration before the transpeptidation reaction occurs. The elongation of the peptidyl chain might be terminated by module M8-mediated L-Leu incorporation, followed by R domain-catalyzed 4 electron reduction to release the resulting octapeptide from the assembly line as an alcohol. Fusaoctaxin A is cleaved by the cluster specific ABC transporter FGM5 to the pentapeptide fusapentaxin A and the tripeptide fusatrixin A. The other enzymes from the cluster, FGM1, FGM2, FGM3 and FGM9 seem not to be involved in the biosynthesis of fusaoctaxin A and their functions have still to be determined. This Gibberella zeae (strain ATCC MYA-4620 / CBS 123657 / FGSC 9075 / NRRL 31084 / PH-1) (Wheat head blight fungus) protein is Nonribosomal peptide synthetase 5.